Reading from the N-terminus, the 488-residue chain is GTPase Der (488 aa).

2 consecutive EngA-type G domains span residues Pro3–Met166 and Ile199–Thr372. GTP contacts are provided by residues Gly9–Ser16, Asp56–Ile60, Asn118–Asp121, Gly205–Ser212, Asp252–Val256, and Asn317–Asp320. The KH-like domain maps to Arg373–Asp457. Positions Phe460–Lys488 are disordered. Residues Arg473 to Lys488 are compositionally biased toward basic residues.

The protein belongs to the TRAFAC class TrmE-Era-EngA-EngB-Septin-like GTPase superfamily. EngA (Der) GTPase family. Associates with the 50S ribosomal subunit.

Its function is as follows. GTPase that plays an essential role in the late steps of ribosome biogenesis. This chain is GTPase Der, found in Shewanella baltica (strain OS223).